Consider the following 261-residue polypeptide: Lipase LipV (261 aa).

Ser87 (nucleophile) is an active-site residue. Catalysis depends on charge relay system residues Asp217 and His240.

This sequence belongs to the AB hydrolase superfamily.

It catalyses the reaction a carboxylic ester + H2O = an alcohol + a carboxylate + H(+). The catalysed reaction is a tetradecanoate ester + H2O = an aliphatic alcohol + tetradecanoate + H(+). The enzyme catalyses decanoate ester + H2O = decanoate + an aliphatic alcohol + H(+). It carries out the reaction an octanoate ester + H2O = an aliphatic alcohol + octanoate + H(+). It catalyses the reaction a dodecanoate ester + H2O = an aliphatic alcohol + dodecanoate + H(+). The catalysed reaction is a butanoate ester + H2O = an aliphatic alcohol + butanoate + H(+). The enzyme catalyses hexadecanoate ester + H2O = an aliphatic alcohol + hexadecanoate + H(+). It carries out the reaction octadecanoate ester + H2O = an aliphatic alcohol + octadecanoate + H(+). With respect to regulation, is inhibited by tetrahydrolipstatin, a specific lipase inhibitor and RHC 80267, a diacylglycerol lipase inhibitor, but not by phenylglyoxal and iodoacetate. Functionally, lipase that displays broad substrate specificity and preferentially hydrolyzes p-nitrophenyl myristate in vitro. Also shows significant activity with pNP-butyrate (68%), pNP-octanoate (82%), pNP-decanoate (90%), and pNP-laurate (74%). Is probably involved in lipid catabolism. Is active at low pH, and might play some important role in mycobacterial biology in macrophages where the bacteria encounters acidic stress. The protein is Lipase LipV of Mycobacterium tuberculosis (strain ATCC 25618 / H37Rv).